The primary structure comprises 226 residues: 2-C-methyl-D-erythritol 4-phosphate cytidylyltransferase (226 aa).

Belongs to the IspD/TarI cytidylyltransferase family. IspD subfamily.

It catalyses the reaction 2-C-methyl-D-erythritol 4-phosphate + CTP + H(+) = 4-CDP-2-C-methyl-D-erythritol + diphosphate. Its pathway is isoprenoid biosynthesis; isopentenyl diphosphate biosynthesis via DXP pathway; isopentenyl diphosphate from 1-deoxy-D-xylulose 5-phosphate: step 2/6. Its function is as follows. Catalyzes the formation of 4-diphosphocytidyl-2-C-methyl-D-erythritol from CTP and 2-C-methyl-D-erythritol 4-phosphate (MEP). In Bacillus cereus (strain ATCC 14579 / DSM 31 / CCUG 7414 / JCM 2152 / NBRC 15305 / NCIMB 9373 / NCTC 2599 / NRRL B-3711), this protein is 2-C-methyl-D-erythritol 4-phosphate cytidylyltransferase.